Reading from the N-terminus, the 1703-residue chain is Protein TIC 214 (1703 aa).

6 consecutive transmembrane segments (helical) span residues 39-61, 67-87, 90-110, 138-158, 174-194, and 220-240; these read YYGF…TFFL, GIIC…SIYC, LYVM…YMFY, LLLD…NPVL, FFLT…INSI, and FSIL…VPLI. Disordered regions lie at residues 615 to 643 and 1431 to 1494; these read GPRK…KERE and TKEP…WKSK. Residues 618 to 660 adopt a coiled-coil conformation; sequence KGKLEDKEKEKEKAAQTQTEVKKEREKEKEERVIKRFQNQSDF. A compositionally biased stretch (basic and acidic residues) spans 619 to 643; the sequence is GKLEDKEKEKEKAAQTQTEVKKERE.

This sequence belongs to the TIC214 family. In terms of assembly, part of the Tic complex.

It is found in the plastid. Its subcellular location is the chloroplast inner membrane. Involved in protein precursor import into chloroplasts. May be part of an intermediate translocation complex acting as a protein-conducting channel at the inner envelope. This is Protein TIC 214 from Psilotum nudum (Whisk fern).